We begin with the raw amino-acid sequence, 141 residues long: Fluoride-specific ion channel FluC 1 (141 aa).

Helical transmembrane passes span 12 to 32, 44 to 64, 79 to 99, and 107 to 127; these read LYAL…LVGV, WATL…AAIA, FVMT…LETF, and ALAA…AVWL. 2 residues coordinate Na(+): G86 and T89.

The protein belongs to the fluoride channel Fluc/FEX (TC 1.A.43) family.

It is found in the cell inner membrane. It catalyses the reaction fluoride(in) = fluoride(out). With respect to regulation, na(+) is not transported, but it plays an essential structural role and its presence is essential for fluoride channel function. Fluoride-specific ion channel. Important for reducing fluoride concentration in the cell, thus reducing its toxicity. This chain is Fluoride-specific ion channel FluC 1, found in Rhodopseudomonas palustris (strain BisB18).